A 159-amino-acid chain; its full sequence is 2-amino-4-hydroxy-6-hydroxymethyldihydropteridine pyrophosphokinase (159 aa).

This sequence belongs to the HPPK family. In terms of assembly, monomer.

The enzyme catalyses 6-hydroxymethyl-7,8-dihydropterin + ATP = (7,8-dihydropterin-6-yl)methyl diphosphate + AMP + H(+). The protein operates within cofactor biosynthesis; tetrahydrofolate biosynthesis; 2-amino-4-hydroxy-6-hydroxymethyl-7,8-dihydropteridine diphosphate from 7,8-dihydroneopterin triphosphate: step 4/4. In terms of biological role, catalyzes the transfer of pyrophosphate from adenosine triphosphate (ATP) to 6-hydroxymethyl-7,8-dihydropterin, an enzymatic step in folate biosynthesis pathway. The protein is 2-amino-4-hydroxy-6-hydroxymethyldihydropteridine pyrophosphokinase (folK) of Escherichia coli (strain K12).